A 778-amino-acid chain; its full sequence is Acyl-homoserine lactone acylase PvdQ (778 aa).

The signal sequence occupies residues Met-1–Ala-25. Residues Ile-196–Gly-218 constitute a propeptide, spacer peptide. Ser-219 acts as the Nucleophile in catalysis.

Belongs to the peptidase S45 family. Heterodimer of an alpha subunit and a beta subunit processed from the same precursor.

It is found in the periplasm. The catalysed reaction is an N-acyl-L-homoserine lactone + H2O = L-homoserine lactone + a carboxylate. Functionally, catalyzes the deacylation of acyl-homoserine lactone (AHL or acyl-HSL), releasing homoserine lactone (HSL) and the corresponding fatty acid. Possesses a specificity for the degradation of long-chain acyl-HSLs (side chains of 11 to 14 carbons in length). This chain is Acyl-homoserine lactone acylase PvdQ (pvdQ), found in Pseudomonas fluorescens (strain Pf0-1).